Here is a 412-residue protein sequence, read N- to C-terminus: FAD-dependent monooxygenase nscC (412 aa).

The N-terminal stretch at Met-1–Ser-21 is a signal peptide. FAD contacts are provided by Glu-35 and Ala-46. N-linked (GlcNAc...) asparagine glycosylation occurs at Asn-92. Residue Arg-119 participates in FAD binding. Asn-170 and Asn-231 each carry an N-linked (GlcNAc...) asparagine glycan. FAD is bound by residues Asp-326 and Gly-339.

It belongs to the paxM FAD-dependent monooxygenase family. It depends on FAD as a cofactor.

Its pathway is secondary metabolite biosynthesis. In terms of biological role, FAD-dependent monooxygenase; part of the gene cluster that mediates the biosynthesis of neosartoricin B, a prenylated anthracenone that probably exhibits T-cell antiproliferative activity, suggestive of a physiological role as an immunosuppressive agent. The non-reducing polyketide synthase nscA probably synthesizes and cyclizes the decaketide backbone. The hydrolase nscB then mediates the product release through hydrolysis followed by spontaneous decarboxylation. The prenyltransferase nscD catalyzes the addition of the dimethylallyl group to the aromatic C5. The FAD-dependent monooxygenase nscC is then responsible for the stereospecific hydroxylation at C2. Neosartoricin B can be converted into two additional compounds neosartoricins C and D. Neosartoricin C is a spirocyclic compound that is cyclized through the attack of C3 hydroxyl on C14, followed by dehydration. On the other hand, neosartoricin D is a further cyclized compound in which attack of C2 on C14 in neosartoricin C results in the formation of the acetal-containing dioxabicyclo-octanone ring. Both of these compounds are novel and possibly represent related metabolites of the gene cluster. The polypeptide is FAD-dependent monooxygenase nscC (Trichophyton verrucosum (strain HKI 0517)).